The sequence spans 117 residues: Minor capsid protein p17 (117 aa).

N-linked (GlcNAc...) asparagine; by host glycosylation occurs at Asn12. Residues 39–59 (AILLGILILLVIILIIVAIVY) form a helical membrane-spanning segment. N-linked (GlcNAc...) asparagine; by host glycans are attached at residues Asn61 and Asn97.

The protein belongs to the asfivirus minor capsid protein p17 family. In terms of assembly, interacts with the minor capsid protein M1249L and with the hexon capsid protein p72 capsomers; these interactions form a rigid zipper structure that stabilizes the capsomers. Interacts with host STING1.

It is found in the virion membrane. The protein localises to the host endoplasmic reticulum membrane. It localises to the host Golgi apparatus membrane. Functionally, together with the penton and the other minor capsid proteins (M1249L, p49), forms a complicated network immediately below the outer capsid shell, stabilizing the whole capsid. Three copies of p17 encircle each p72 capsomer in the inner capsid shell, anchoring p72 capsomers on the inner membrane. Required for the assembly of the capsid and icosahedral morphogenesis. Additionally, inhibits the host cGAS-STING pathway through its interaction with STING1 and subsequent interference of the recruitment of downstream components TBK1 and IKBKE. This is Minor capsid protein p17 from African swine fever virus (strain Badajoz 1971 Vero-adapted) (Ba71V).